Here is a 623-residue protein sequence, read N- to C-terminus: Leucine-rich repeat, immunoglobulin-like domain and transmembrane domain-containing protein 1 (623 aa).

A signal peptide spans 1-21 (MRVALGMLWLLALAWPPQARG). Positions 22-59 (FCPSQCSCSLHIMGDGSKARTVVCNDPDMTLPPASIPP) constitute an LRRNT domain. The Lumenal portion of the chain corresponds to 22–526 (FCPSQCSCSL…EVVDAENTQQ (505 aa)). LRR repeat units follow at residues 60 to 81 (DTSR…AFRP), 84 to 105 (RLEQ…MLRG), 108 to 129 (RLRE…ALRD), 132 to 153 (KLRL…AARF), and 156 to 177 (NLTF…LIVS). N156 is a glycosylation site (N-linked (GlcNAc...) asparagine). Residues 201 to 253 (NPWACDCRLYDLVHLLDGWAPNLAFIETELRCASPRSLAGVAFSQLELRKCQG) enclose the LRRCT domain. The region spanning 266–335 (LLGGTALLRC…YICQAKNFLG (70 aa)) is the Ig-like C2-type domain. Cysteines 275 and 328 form a disulfide. N296 and N455 each carry an N-linked (GlcNAc...) asparagine glycan. One can recognise a Fibronectin type-III domain in the interval 430-518 (MVRSVKVVGD…QCVIFSTNEV (89 aa)). The chain crosses the membrane as a helical span at residues 527 to 547 (LINVVVISVAIVIALPLTLLV). The Cytoplasmic segment spans residues 548–623 (CCSALQKRCR…GGRRINEYFC (76 aa)). The stretch at 571–594 (YVNLERLGYSEDGLEELSRHSVSE) is one LRR 6 repeat.

In terms of assembly, may form a homodimer. Interacts with LRIT2; may form a heterodimer with LRIT2. Interacts (via its N-terminal extracellular domain) with metabotropic glutamate receptor GRM6. Interacts (via its extreme C-terminus) with the scaffold protein FRMPD2 (via the third PDZ domain); the interaction leads to their colocalization in photoreceptor synapses.

It is found in the endoplasmic reticulum membrane. The protein resides in the cell projection. The protein localises to the dendrite. Its function is as follows. Photoreceptor synaptic protein essential for normal vision. Involved in synapse formation in cone photoreceptor cells. The polypeptide is Leucine-rich repeat, immunoglobulin-like domain and transmembrane domain-containing protein 1 (LRIT1) (Homo sapiens (Human)).